We begin with the raw amino-acid sequence, 2168 residues long: Bromodomain adjacent to zinc finger domain protein 2B (2168 aa).

Disordered stretches follow at residues 1-29, 140-348, 409-428, 459-479, 528-698, 719-740, 841-872, and 1021-1043; these read MESG…ASVV, FAPP…KQPQ, LKAG…SELR, SNPK…ENNH, STPF…LHIA, GTSS…RRVT, MEGR…PPNV, and RKKA…LNKE. Low complexity predominate over residues 8–29; the sequence is PSSAASSTTPTSSSTPSVASVV. Polar residues-rich tracts occupy residues 146–163 and 171–193; these read NHDS…SNRN and GSIN…STTA. Composition is skewed to low complexity over residues 194-204 and 240-263; these read SSSMGQTKSTS and ESSS…ISSS. Over residues 264-291 the composition is skewed to acidic residues; the sequence is DSDDLEEDEEEEDQSIEESEDDDSDSES. A compositionally biased stretch (basic and acidic residues) spans 307–325; that stretch reads SDPKADGQKATEKAQEKRI. The span at 335–348 shows a compositional bias: low complexity; that stretch reads SQTHSFQSQQKQPQ. Composition is skewed to polar residues over residues 461–479 and 528–551; these read PKAT…ENNH and STPF…QTPV. A compositionally biased stretch (basic and acidic residues) spans 592-605; sequence RGTDSDIPSSKDSE. The span at 606-663 shows a compositional bias: acidic residues; it reads DSNEDEEEDDEEEDEEDDEDDESDDSQSESDSNSESDTEGSEEEDDDDKDQDESDSDT. Residues 670–693 show a composition bias toward polar residues; that stretch reads MKLNKTTSSVKSPSMSLTGHSTPR. Low complexity predominate over residues 720 to 732; sequence TSSSTLTSSPHSG. The MBD domain occupies 739–810; sequence VTDERELRIP…DNFSFSAKIR (72 aa). Residues 841–861 show a composition bias toward basic and acidic residues; sequence MEGRRGRPPNPDRQRAREESR. Positions 883–1061 form a coiled coil; that stretch reads AKLLRKLQAQ…ELEMAKELKK (179 aa). The region spanning 1087-1152 is the DDT domain; that stretch reads GSTFSDCLMV…LSAAVCDPGL (66 aa). A disordered region spans residues 1265 to 1341; that stretch reads KRDTSGGIDL…CEDEDEGDQA (77 aa). Acidic residues predominate over residues 1297–1321; the sequence is SDYDDDDDDDSDDQGDEDDEDEEDK. Residues 1322 to 1331 show a composition bias toward basic and acidic residues; it reads EDKKGKKTDI. The stretch at 1334–1375 forms a coiled coil; sequence DEDEGDQAASVEELEKQIEKLSKQQSQYRRKLFDASHSLRSV. K1425 participates in a covalent cross-link: Glycyl lysine isopeptide (Lys-Gly) (interchain with G-Cter in SUMO2). At K1462 the chain carries N6-acetyllysine. Phosphoserine is present on residues S1465 and S1467. A compositionally biased stretch (polar residues) spans 1503–1533; it reads SGKHSLGSVQSTATQSNVEKADSNNLFNTGS. Disordered stretches follow at residues 1503–1542, 1582–1607, and 1670–1694; these read SGKH…FYSP, SLVT…SSAQ, and TSNV…AQPA. A compositionally biased stretch (pro residues) spans 1588–1600; the sequence is SQPPSKSPSPTPA. The span at 1670–1692 shows a compositional bias: polar residues; sequence TSNVASSKSESPVPQNEKATSAQ. A Phosphoserine modification is found at S1680. The PHD-type zinc-finger motif lies at 1931–1981; the sequence is KVYCQICRKGDNEELLLLCDGCDKGCHTYCHRPKITTIPDGDWFCPACIAK. The tract at residues 1998–2040 is disordered; sequence KTNESKKGKKVTLTGDTEDEDSASTSSSLKRGNKDLKKRKMEE. A Phosphothreonine modification is found at T2014. S2019 carries the post-translational modification Phosphoserine. The segment covering 2029-2040 has biased composition (basic and acidic residues); the sequence is GNKDLKKRKMEE. The 105-residue stretch at 2060 to 2164 folds into the Bromo domain; that stretch reads RDDSKDLALC…KYFEKKWTDT (105 aa).

The protein belongs to the WAL family. As to quaternary structure, component of the BRF-1 ISWI chromatin remodeling complex, at least composed of SMARCA1 and BAZ2B, which regulates the spacing of histone octamers on the DNA template to facilitate access to DNA. Within the BRF-1 ISWI chromatin remodeling complex interacts with SMARCA1; the interaction is direct. Component of the BRF-5 ISWI chromatin remodeling complex, at least composed of SMARCA5/SNF2H and BAZ2B, which regulates the spacing of histone octamers on the DNA template to facilitate access to DNA. Within the BRF-5 ISWI chromatin remodeling complex interacts with SMARCA5/SNF2H; the interaction is direct. Interacts with acetylated lysine residues on histone H1.4, H2A, H2B, H3 and H4 (in vitro). Interacts with EHMT1. Expressed at varying levels in several tissues, whereas a smaller transcript was expressed specifically in testis.

The protein resides in the nucleus. In terms of biological role, regulatory subunit of the ATP-dependent BRF-1 and BRF-5 ISWI chromatin remodeling complexes, which form ordered nucleosome arrays on chromatin and facilitate access to DNA during DNA-templated processes such as DNA replication, transcription, and repair. Both complexes regulate the spacing of nucleosomes along the chromatin and have the ability to slide mononucleosomes to the center of a DNA template. The BRF-1 ISWI chromatin remodeling complex has a lower ATP hydrolysis rate than the BRF-5 ISWI chromatin remodeling complex. Chromatin reader protein, which may play a role in transcriptional regulation via interaction with ISWI. Involved in positively modulating the rate of age-related behavioral deterioration. Represses the expression of mitochondrial function-related genes, perhaps by occupying their promoter regions, working in concert with histone methyltransferase EHMT1. This chain is Bromodomain adjacent to zinc finger domain protein 2B (BAZ2B), found in Homo sapiens (Human).